Here is a 223-residue protein sequence, read N- to C-terminus: Transmembrane protein 126 (223 aa).

Residues 1-39 (MALSRAKPDELPRDAVVITEDQALKYQWKIITSWDKIGE) are Mitochondrial matrix-facing. The helical transmembrane segment at 40–62 (VWSLRYTPGILSALAAGTGAYIN) threads the bilayer. Topologically, residues 63 to 78 (NHYRTKLRLGGHGRLS) are mitochondrial intermembrane. A helical transmembrane segment spans residues 79-99 (TYLPIVAVPAIFTMLAHKFFI). Residues 100–123 (QRPILLNPLGECPVCIQMRSAAFQ) are Mitochondrial matrix-facing. Residues 124–144 (TSLGIVYPTILAPFAAFLFAT) form a helical membrane-spanning segment. The Mitochondrial intermembrane portion of the chain corresponds to 145-171 (RCYTYRIPSITENPREVFLLWRKFTRP). Residues 172 to 192 (IVPALGTLIGLQALLTMFLTG) form a helical membrane-spanning segment. The Mitochondrial matrix segment spans residues 193–223 (QEDKQNFKLMLRMREIEHQVEEEHLPQRMDF).

Belongs to the TMEM126 family. As to quaternary structure, associates with mitochondrial complex I assembly intermediates during its biogenesis.

It is found in the mitochondrion membrane. Its function is as follows. As part of the MCIA complex, involved in the assembly of the mitochondrial complex I. The protein is Transmembrane protein 126 of Drosophila melanogaster (Fruit fly).